The primary structure comprises 719 residues: Alpha-galactosidase 2 (719 aa).

Asp-472 acts as the Nucleophile in catalysis. The active-site Proton donor is the Asp-542.

This sequence belongs to the glycosyl hydrolase 36 family.

The catalysed reaction is Hydrolysis of terminal, non-reducing alpha-D-galactose residues in alpha-D-galactosides, including galactose oligosaccharides, galactomannans and galactolipids.. In terms of biological role, alpha-galactosidase associated with the sucrase operon. This Pediococcus pentosaceus protein is Alpha-galactosidase 2 (agaS).